The chain runs to 596 residues: Nitrite reductase (596 aa).

The first 29 residues, 1–29, serve as a signal peptide directing secretion; that stretch reads MRQRTPFARPGLLASAALALVLGPLAVAA. Positions 30-76 are N-terminal tail; that stretch reads QEQAAPPKDPAAALEDHKTKTDNRYEPSLDNLAQQDVAALGAPEGIP. H46 contacts heme c. Heme d1 contacts are provided by Y54 and S57. Residues 77 to 162 enclose the Cytochrome c domain; it reads ALSDAQYNEA…ANYLLLDPAA (86 aa). The heme c site is built by C94, C97, H98, K108, and Y122. Residues W138, R203, H229, R232, R245, R272, Y292, R420, Q536, and T583 each coordinate heme d1. Residues 163-596 are D1-heme domain; that stretch reads PPEFGMKEMR…NVYNTMTDTY (434 aa).

In terms of assembly, homodimer. Heme c serves as cofactor. Heme is required as a cofactor.

It localises to the periplasm. The catalysed reaction is nitric oxide + Fe(III)-[cytochrome c] + H2O = Fe(II)-[cytochrome c] + nitrite + 2 H(+). It catalyses the reaction A + NH4(+) + H2O = hydroxylamine + AH2 + H(+). In terms of biological role, inactivation of this cytochrome oxidase results in the loss of nitrite and nitric oxide reductase activities, but not of nitrous oxide reductase activity. This Paracoccus denitrificans (strain Pd 1222) protein is Nitrite reductase (nirS).